Here is a 546-residue protein sequence, read N- to C-terminus: MDNQRLILFIVFSFSLLLLWEAWQDKQAPAPATRPVAGAPAGSAAPTPSTALNAPAAAPAQTGFAKGARAVVETDVLRATIDANGGDLRELQLLGYRETEDKNRVFTLFEDSRTRPYLAQSGFVGGGLPTHRSTFELTPGTYRLTGGAARLEVPLVWNDAARGVRVEKTFIFTRGSHEVAVRTRVVNRGKEPLDLTPYYQFTRHGEAPRGESFFLYTYTGPAFYTDAKKFQKVPFTDIQDGSAEFEKTATNGWVGLVQHHFVAAWLPEESVKREYYARSLGEGLYSAGVILAEGQLAPGQQKTFTVPLYAGPQSQAVLEKAAPGLDLARDYGWLTPLAYPIFWSLEKIERLVGNWGWAIIILTILIKLALYPLSAAGYKSMAKMKKLTPRLQQLKETYGDDRAKLHQAMAEMYKTEKINPLGGCLPILIQIPVFIALYWVLLAAVEMRGAPWLGWITDLTAPDPWYILPIIMGVTSILQVKLNPQPMDPMQAKIMMIMPVAFTVMFVFFPAGLVLYWVVNNILSIAQQWAINKQVEGSGKPAPAKT.

Residues 6-26 (LILFIVFSFSLLLLWEAWQDK) traverse the membrane as a helical segment. Residues 31–56 (PATRPVAGAPAGSAAPTPSTALNAPA) are disordered. Residues 37-56 (AGAPAGSAAPTPSTALNAPA) are compositionally biased toward low complexity. The next 4 membrane-spanning stretches (helical) occupy residues 351-371 (LVGN…LALY), 425-445 (LPIL…LAAV), 465-482 (WYIL…QVKL), and 494-514 (IMMI…AGLV).

It belongs to the OXA1/ALB3/YidC family. Type 1 subfamily. As to quaternary structure, interacts with the Sec translocase complex via SecD. Specifically interacts with transmembrane segments of nascent integral membrane proteins during membrane integration.

The protein localises to the cell inner membrane. In terms of biological role, required for the insertion and/or proper folding and/or complex formation of integral membrane proteins into the membrane. Involved in integration of membrane proteins that insert both dependently and independently of the Sec translocase complex, as well as at least some lipoproteins. Aids folding of multispanning membrane proteins. This Thiobacillus denitrificans (strain ATCC 25259 / T1) protein is Membrane protein insertase YidC.